A 208-amino-acid polypeptide reads, in one-letter code: MCKGLAALPATCLKSAKDMKHRLGVLLQKSDSCDYGSSQGKKEKVSSSQRVSQEEVKKWAESLENLIHHDRGLAAFRAFLKSEYSEENIEFWVSCEDYKKTKSPAKLSTKARKIYDEFISVQATKEVNLDSCTREKTSHNMLEPTLSCFDEAQRKIFTLMEKDSYRRFLKSPYLDLVSPPRAGCGPENCKRAHAHALDCNSNIISQCA.

Residues C2, C12, and C95 are each lipidated (S-palmitoyl cysteine). One can recognise an RGS domain in the interval 62–178 (SLENLIHHDR…LKSPYLDLVS (117 aa)).

Palmitoylated on Cys-2 and/or Cys-12. Post-translationally, phosphorylated by cyclic GMP-dependent protein kinase. As to expression, expressed in the developing nervous system.

Its function is as follows. Inhibits signal transduction by increasing the GTPase activity of G protein alpha subunits thereby driving them into their inactive GDP-bound form. Activity on G(z)-alpha is inhibited by phosphorylation of the G-protein. Activity on G(z)-alpha and G(i)-alpha-1 is inhibited by palmitoylation of the G-protein. This Gallus gallus (Chicken) protein is Regulator of G-protein signaling 4 (RGS4).